Reading from the N-terminus, the 481-residue chain is Hyaluronidase-4 (481 aa).

The Cytoplasmic portion of the chain corresponds to 1–11 (MQLLPEGQLRL). Residues 12–32 (CVFQPVHLTSGLLILFILKSI) form a helical membrane-spanning segment. At 33–455 (SSLKPARLPV…CREMTEASGP (423 aa)) the chain is on the extracellular side. 5 disulfide bridges follow: Cys59–Cys351, Cys223–Cys237, Cys376–Cys387, Cys381–Cys435, and Cys437–Cys446. 2 N-linked (GlcNAc...) asparagine glycosylation sites follow: Asn64 and Asn115. Residue Glu147 is the Proton donor of the active site. N-linked (GlcNAc...) asparagine glycosylation is found at Asn232 and Asn343. Residues 456–476 (SGLSLSSSSVITLCLLVLAGY) traverse the membrane as a helical segment. At 477-481 (QSIQL) the chain is on the cytoplasmic side.

It belongs to the glycosyl hydrolase 56 family.

It localises to the membrane. The catalysed reaction is Random hydrolysis of (1-&gt;4)-linkages between N-acetyl-beta-D-glucosamine and D-glucuronate residues in hyaluronate.. Its function is as follows. Endo-hyaluronidase that degrades hyaluronan to smaller oligosaccharide fragments. Also has chondroitin sulfate hydrolase activity, The best substrate being the galactosaminidic linkage in the sequence of a trisulfated tetrasaccharide. The polypeptide is Hyaluronidase-4 (Hyal4) (Mus musculus (Mouse)).